We begin with the raw amino-acid sequence, 322 residues long: RNA pseudouridine synthase 1 (322 aa).

Asp120 is an active-site residue.

It belongs to the pseudouridine synthase RluA family.

The catalysed reaction is a uridine in RNA = a pseudouridine in RNA. This is RNA pseudouridine synthase 1 from Arabidopsis thaliana (Mouse-ear cress).